The following is a 173-amino-acid chain: MTTIVCVRKDGKVAIGGDGQATLGNCIEKGTVRKVRRLYKDKVVTGFAGSTADAFILRDLFEKKLELHQGHLVKSAVELAKEWRTERALRRLEAMMIVANDSEFLLVSGSGDVIEPEQDVLAIGSGGNYAKAAALALLRTENNLSAKEIVAEALKIAGDIDIYSNYNHVIEEV.

Thr2 is a catalytic residue. The Na(+) site is built by Gly158, Asp161, and Ser164.

This sequence belongs to the peptidase T1B family. HslV subfamily. A double ring-shaped homohexamer of HslV is capped on each side by a ring-shaped HslU homohexamer. The assembly of the HslU/HslV complex is dependent on binding of ATP.

Its subcellular location is the cytoplasm. It catalyses the reaction ATP-dependent cleavage of peptide bonds with broad specificity.. With respect to regulation, allosterically activated by HslU binding. Functionally, protease subunit of a proteasome-like degradation complex believed to be a general protein degrading machinery. In Mannheimia haemolytica (Pasteurella haemolytica), this protein is ATP-dependent protease subunit HslV.